The chain runs to 306 residues: Cilia- and flagella-associated protein 73 (306 aa).

2 coiled-coil regions span residues 49–139 (LQAQ…QRLE) and 197–231 (QSEK…WESK).

The protein belongs to the CFAP73 family.

It localises to the cytoplasm. Its subcellular location is the cytoskeleton. The protein resides in the cilium axoneme. Its function is as follows. May play a role in ciliary/flagellar motility by regulating the assembly and the activity of axonemal inner dynein arm. This chain is Cilia- and flagella-associated protein 73, found in Mus musculus (Mouse).